The primary structure comprises 397 residues: Arginine biosynthesis bifunctional protein ArgJ (397 aa).

6 residues coordinate substrate: Thr147, Lys173, Thr184, Glu270, Asn392, and Thr397. Thr184 acts as the Nucleophile in catalysis.

Belongs to the ArgJ family. In terms of assembly, heterotetramer of two alpha and two beta chains.

It is found in the cytoplasm. It catalyses the reaction N(2)-acetyl-L-ornithine + L-glutamate = N-acetyl-L-glutamate + L-ornithine. The enzyme catalyses L-glutamate + acetyl-CoA = N-acetyl-L-glutamate + CoA + H(+). It functions in the pathway amino-acid biosynthesis; L-arginine biosynthesis; L-ornithine and N-acetyl-L-glutamate from L-glutamate and N(2)-acetyl-L-ornithine (cyclic): step 1/1. The protein operates within amino-acid biosynthesis; L-arginine biosynthesis; N(2)-acetyl-L-ornithine from L-glutamate: step 1/4. Its function is as follows. Catalyzes two activities which are involved in the cyclic version of arginine biosynthesis: the synthesis of N-acetylglutamate from glutamate and acetyl-CoA as the acetyl donor, and of ornithine by transacetylation between N(2)-acetylornithine and glutamate. In Streptococcus mutans serotype c (strain ATCC 700610 / UA159), this protein is Arginine biosynthesis bifunctional protein ArgJ.